A 462-amino-acid chain; its full sequence is Phosphoglucosamine mutase (462 aa).

Residue Ser112 is the Phosphoserine intermediate of the active site. 4 residues coordinate Mg(2+): Ser112, Asp250, Asp252, and Asp254. Ser112 is subject to Phosphoserine.

Belongs to the phosphohexose mutase family. Mg(2+) serves as cofactor. In terms of processing, activated by phosphorylation.

It carries out the reaction alpha-D-glucosamine 1-phosphate = D-glucosamine 6-phosphate. Catalyzes the conversion of glucosamine-6-phosphate to glucosamine-1-phosphate. In Parasynechococcus marenigrum (strain WH8102), this protein is Phosphoglucosamine mutase.